Reading from the N-terminus, the 462-residue chain is ATP synthase subunit beta (462 aa).

151–158 provides a ligand contact to ATP; that stretch reads GGAGVGKT.

The protein belongs to the ATPase alpha/beta chains family. In terms of assembly, F-type ATPases have 2 components, CF(1) - the catalytic core - and CF(0) - the membrane proton channel. CF(1) has five subunits: alpha(3), beta(3), gamma(1), delta(1), epsilon(1). CF(0) has four main subunits: a(1), b(1), b'(1) and c(9-12).

The protein resides in the cell inner membrane. It catalyses the reaction ATP + H2O + 4 H(+)(in) = ADP + phosphate + 5 H(+)(out). In terms of biological role, produces ATP from ADP in the presence of a proton gradient across the membrane. The catalytic sites are hosted primarily by the beta subunits. This Chlorobium limicola (strain DSM 245 / NBRC 103803 / 6330) protein is ATP synthase subunit beta.